The sequence spans 314 residues: GTPase-interacting component 1 (314 aa).

Disordered stretches follow at residues 112 to 156 (SRRH…KHDV), 199 to 221 (TMDS…QLDS), and 241 to 261 (LGDS…SFSG). A CRIB domain is found at 126–139 (ISTPFDFHHISHAN). Positions 140–156 (GKREDNPLESHEEKHDV) are enriched in basic and acidic residues. Residues 208-221 (ETNNTPNGNKQLDS) show a composition bias toward polar residues. Over residues 251-260 (PSSPSVSSFS) the composition is skewed to low complexity.

Belongs to the BORG/CEP family. In terms of assembly, interacts with GTP-bound CDC42.

It is found in the bud neck. The protein resides in the bud tip. It localises to the cytoplasm. The protein localises to the cell cortex. Its subcellular location is the cytoskeleton. In terms of biological role, required for cell size and shape control, bud site selection, bud emergence, actin cytoskeletal organization, mitotic spindle orientation/positioning, and mating projection formation in response to mating pheromone. This is GTPase-interacting component 1 (GIC1) from Saccharomyces cerevisiae (strain ATCC 204508 / S288c) (Baker's yeast).